An 88-amino-acid chain; its full sequence is Small ribosomal subunit protein uS15 (88 aa).

This sequence belongs to the universal ribosomal protein uS15 family. Part of the 30S ribosomal subunit. Forms a bridge to the 50S subunit in the 70S ribosome, contacting the 23S rRNA.

Its function is as follows. One of the primary rRNA binding proteins, it binds directly to 16S rRNA where it helps nucleate assembly of the platform of the 30S subunit by binding and bridging several RNA helices of the 16S rRNA. Forms an intersubunit bridge (bridge B4) with the 23S rRNA of the 50S subunit in the ribosome. The protein is Small ribosomal subunit protein uS15 of Caldicellulosiruptor saccharolyticus (strain ATCC 43494 / DSM 8903 / Tp8T 6331).